The following is a 436-amino-acid chain: Tol-Pal system protein TolB (436 aa).

An N-terminal signal peptide occupies residues 1 to 28; sequence MEMLRRNFFRLLMVLVAGCGLIASPAKA.

The protein belongs to the TolB family. The Tol-Pal system is composed of five core proteins: the inner membrane proteins TolA, TolQ and TolR, the periplasmic protein TolB and the outer membrane protein Pal. They form a network linking the inner and outer membranes and the peptidoglycan layer.

It localises to the periplasm. Part of the Tol-Pal system, which plays a role in outer membrane invagination during cell division and is important for maintaining outer membrane integrity. The protein is Tol-Pal system protein TolB of Sinorhizobium medicae (strain WSM419) (Ensifer medicae).